A 137-amino-acid chain; its full sequence is Transcription antitermination protein NusB (137 aa).

The protein belongs to the NusB family.

In terms of biological role, involved in transcription antitermination. Required for transcription of ribosomal RNA (rRNA) genes. Binds specifically to the boxA antiterminator sequence of the ribosomal RNA (rrn) operons. In Borreliella afzelii (strain PKo) (Borrelia afzelii), this protein is Transcription antitermination protein NusB.